The primary structure comprises 37 residues: ATP synthase subunit O, mitochondrial (37 aa).

This sequence belongs to the ATPase delta chain family. F-type ATPases have 2 components, CF(1) - the catalytic core - and CF(0) - the membrane proton channel. CF(1) has five subunits: alpha(3), beta(3), gamma(1), delta(1), epsilon(1). CF(0) has three main subunits: a, b and c.

The protein resides in the mitochondrion. It localises to the mitochondrion inner membrane. In terms of biological role, mitochondrial membrane ATP synthase (F(1)F(0) ATP synthase or Complex V) produces ATP from ADP in the presence of a proton gradient across the membrane which is generated by electron transport complexes of the respiratory chain. F-type ATPases consist of two structural domains, F(1) - containing the extramembraneous catalytic core and F(0) - containing the membrane proton channel, linked together by a central stalk and a peripheral stalk. During catalysis, ATP synthesis in the catalytic domain of F(1) is coupled via a rotary mechanism of the central stalk subunits to proton translocation. Part of the complex F(0) domain and the peripheric stalk, which acts as a stator to hold the catalytic alpha(3)beta(3) subcomplex and subunit a/ATP6 static relative to the rotary elements. The protein is ATP synthase subunit O, mitochondrial of Solanum tuberosum (Potato).